The sequence spans 463 residues: MEYRVEHDTMGEVKVPNDKYWGAQTERSFENFKIGCEKMPKVLIYAFANLKKSLALVNNKLGKLDDAKKNAIVQACDEIIAGKFDDNFPLAIWQTGSGTQSNMNMNEVIANRATEIMGGDFRKEKLVHPNDHVNMSQSSNDTFPTAMSIVAVEQVEKKLIPALDELIATFEKKVKEFDGIIKIGRTHLQDATPLTLAQEFSGYLSMLLHSKEQIIASLPTLRELAIGGTAVGTGLNAHPELSQKVSEELTQLIGTKFISSPNKFHALTSHDAINFTHGAMKGLAANLMKIANDIRWLASGPRCGLGELIIPENEPGSSIMPGKVNPTQCEAVTMVAVQVMGNDVAIGFAASQGNFELNVFKPVIIYNFLQSLDLLADSMHSFNIHCAVGIEPNRAKIDHNLHNSLMLVTALNPHIGYENAAKVAKNAHKKGISLKESTMELGLVSEEDFNKFVDPTKMIGPKA.

Residues 97 to 99, 128 to 131, 138 to 140, and Thr-186 contribute to the substrate site; these read SGT, HPND, and SSN. The Proton donor/acceptor role is filled by His-187. Residue Ser-317 is part of the active site. Substrate is bound by residues Ser-318 and 323–325; that span reads KVN.

This sequence belongs to the class-II fumarase/aspartase family. Fumarase subfamily. As to quaternary structure, homotetramer.

It localises to the cytoplasm. It carries out the reaction (S)-malate = fumarate + H2O. The protein operates within carbohydrate metabolism; tricarboxylic acid cycle; (S)-malate from fumarate: step 1/1. In terms of biological role, involved in the TCA cycle. Catalyzes the stereospecific interconversion of fumarate to L-malate. This is Fumarate hydratase class II from Campylobacter jejuni subsp. jejuni serotype O:2 (strain ATCC 700819 / NCTC 11168).